The primary structure comprises 72 residues: Translation initiation factor IF-1 (72 aa).

An S1-like domain is found at 1 to 72 (MAKDDVIEVE…TRGRITYRYK (72 aa)). Phosphotyrosine is present on Tyr-60.

Belongs to the IF-1 family. Component of the 30S ribosomal translation pre-initiation complex which assembles on the 30S ribosome in the order IF-2 and IF-3, IF-1 and N-formylmethionyl-tRNA(fMet); mRNA recruitment can occur at any time during PIC assembly.

Its subcellular location is the cytoplasm. Functionally, one of the essential components for the initiation of protein synthesis. Stabilizes the binding of IF-2 and IF-3 on the 30S subunit to which N-formylmethionyl-tRNA(fMet) subsequently binds. Helps modulate mRNA selection, yielding the 30S pre-initiation complex (PIC). Upon addition of the 50S ribosomal subunit IF-1, IF-2 and IF-3 are released leaving the mature 70S translation initiation complex. This Bacillus licheniformis (strain ATCC 14580 / DSM 13 / JCM 2505 / CCUG 7422 / NBRC 12200 / NCIMB 9375 / NCTC 10341 / NRRL NRS-1264 / Gibson 46) protein is Translation initiation factor IF-1.